We begin with the raw amino-acid sequence, 338 residues long: DNA-directed RNA polymerase subunit alpha (338 aa).

The interval 1–234 (MIQKNWQELT…DQLNVFVNFE (234 aa)) is alpha N-terminal domain (alpha-NTD). Residues 250-338 (FNPALLKKVD…DLAKRFEEHY (89 aa)) form an alpha C-terminal domain (alpha-CTD) region.

Belongs to the RNA polymerase alpha chain family. Homodimer. The RNAP catalytic core consists of 2 alpha, 1 beta, 1 beta' and 1 omega subunit. When a sigma factor is associated with the core the holoenzyme is formed, which can initiate transcription.

It carries out the reaction RNA(n) + a ribonucleoside 5'-triphosphate = RNA(n+1) + diphosphate. DNA-dependent RNA polymerase catalyzes the transcription of DNA into RNA using the four ribonucleoside triphosphates as substrates. This is DNA-directed RNA polymerase subunit alpha from Methylocella silvestris (strain DSM 15510 / CIP 108128 / LMG 27833 / NCIMB 13906 / BL2).